The following is a 412-amino-acid chain: Lysosomal phospholipase A and acyltransferase (412 aa).

A signal peptide spans 1–33 (MGLHLRPYRVGLLPDGLLFLLLLLMLLADPALP). Aspartate 46 provides a ligand contact to substrate. A disulfide bridge links cysteine 65 with cysteine 89. Residue asparagine 99 is glycosylated (N-linked (GlcNAc...) asparagine). The active-site Acyl-ester intermediate is the serine 198. Serine 198 is a binding site for Zn(2+). Position 199 (methionine 199) interacts with substrate. N-linked (GlcNAc...) asparagine glycosylation is found at asparagine 273 and asparagine 289. The Zn(2+) site is built by aspartate 340 and cysteine 355. Catalysis depends on charge relay system residues aspartate 360 and histidine 392. Histidine 392 is a binding site for Zn(2+). N-linked (GlcNAc...) asparagine glycosylation occurs at asparagine 398.

It belongs to the AB hydrolase superfamily. Lipase family. N-glycosylated. N-glycosylation is important for maturation of the enzyme and normal subcellular location. Detected in blood plasma (at protein level). Ubiquitous. Highly expressed in heart, placenta, skeletal muscle, kidney and pancreas. Detected at lower levels in spleen, thymus, prostate, testis, ovary, small intestine, colon and peripheral blood leukocytes.

The protein resides in the lysosome. It localises to the secreted. Its subcellular location is the membrane. The enzyme catalyses a 1,2-diacyl-sn-glycero-3-phosphocholine + H2O = a 2-acyl-sn-glycero-3-phosphocholine + a fatty acid + H(+). It catalyses the reaction 1-hexadecanoyl-2-(9Z-octadecenoyl)-sn-glycero-3-phosphocholine + H2O = 2-(9Z-octadecenoyl)-sn-glycero-3-phosphocholine + hexadecanoate + H(+). The catalysed reaction is 1-hexadecanoyl-2-glutaroyl-sn-glycero-3-phosphocholine + H2O = 2-glutaroyl-sn-glycero-3-phosphocholine + hexadecanoate + H(+). It carries out the reaction 1-hexadecanoyl-2-nonadioyl-sn-glycero-3-phosphocholine + H2O = 2-nonadioyl-sn-glycero-3-phosphocholine + hexadecanoate + H(+). The enzyme catalyses 1-hexadecanoyl-2-(5-oxopentanoyl)-sn-glycero-3-phosphocholine + H2O = 2-(5-oxopentanoyl)-sn-glycero-3-phosphocholine + hexadecanoate + H(+). It catalyses the reaction 1-hexadecanoyl-2-(9-oxononanoyl)-sn-glycero-3-phosphocholine + H2O = 2-(9-oxononanoyl)-sn-glycero-3-phosphocholine + hexadecanoate + H(+). The catalysed reaction is 1,2-dihexadecanoyl-sn-glycero-3-phosphocholine + H2O = 2-hexadecanoyl-sn-glycero-3-phosphocholine + hexadecanoate + H(+). It carries out the reaction a 1,2-diacyl-sn-glycero-3-phosphocholine + H2O = a 1-acyl-sn-glycero-3-phosphocholine + a fatty acid + H(+). The enzyme catalyses 1,2-di-(9Z-octadecenoyl)-sn-glycero-3-phosphocholine + H2O = 1-(9Z-octadecenoyl)-sn-glycero-3-phosphocholine + (9Z)-octadecenoate + H(+). It catalyses the reaction 1-hexadecanoyl-2-(9Z-octadecenoyl)-sn-glycero-3-phosphocholine + H2O = 1-hexadecanoyl-sn-glycero-3-phosphocholine + (9Z)-octadecenoate + H(+). The catalysed reaction is 1,2-dihexadecanoyl-sn-glycero-3-phosphocholine + H2O = 1-hexadecanoyl-sn-glycero-3-phosphocholine + hexadecanoate + H(+). It carries out the reaction a 1-acyl-sn-glycero-3-phosphocholine + H2O = sn-glycerol 3-phosphocholine + a fatty acid + H(+). The enzyme catalyses 1-hexadecanoyl-sn-glycero-3-phosphocholine + H2O = sn-glycerol 3-phosphocholine + hexadecanoate + H(+). It catalyses the reaction N-(acetyl)-sphing-4-enine + a 1,2-diacyl-sn-glycero-3-phosphoethanolamine = 1-O-acyl-N-(acetyl)-sphing-4-enine + a 2-acyl-sn-glycero-3-phosphoethanolamine. The catalysed reaction is 1-hexadecanoyl-2-(9Z-octadecenoyl)-sn-glycero-3-phosphoethanolamine + N-(acetyl)-sphing-4-enine = 2-(9Z-octadecenoyl)-sn-glycero-3-phosphoethanolamine + 1-hexadecanoyl-N-(acetyl)-sphing-4-enine. It carries out the reaction 1-hexadecanoyl-2-(9Z,12Z-octadecadienoyl)-sn-glycero-3-phosphoethanolamine + N-(acetyl)-sphing-4-enine = 2-(9Z,12Z)-octadecadienoyl-sn-glycero-3-phosphoethanolamine + 1-hexadecanoyl-N-(acetyl)-sphing-4-enine. The enzyme catalyses 1-hexadecanoyl-2-(5Z,8Z,11Z,14Z-eicosatetraenoyl)-sn-glycero-3-phosphoethanolamine + N-(acetyl)-sphing-4-enine = 2-(5Z,8Z,11Z,14Z)-eicosatetraenoyl-sn-glycero-3-phosphoethanolamine + 1-hexadecanoyl-N-(acetyl)-sphing-4-enine. It catalyses the reaction N-(acetyl)-sphing-4-enine + a 1,2-diacyl-sn-glycero-3-phosphoethanolamine = 1-O-acyl-N-(acetyl)-sphing-4-enine + a 1-acyl-sn-glycero-3-phosphoethanolamine. The catalysed reaction is 1-hexadecanoyl-2-(9Z-octadecenoyl)-sn-glycero-3-phosphoethanolamine + N-(acetyl)-sphing-4-enine = 1-(9Z-octadecenoyl)-N-(acetyl)-sphing-4-enine + 1-hexadecanoyl-sn-glycero-3-phosphoethanolamine. It carries out the reaction 1-hexadecanoyl-2-(9Z,12Z-octadecadienoyl)-sn-glycero-3-phosphoethanolamine + N-(acetyl)-sphing-4-enine = 1-(9Z,12Z-octadecadienoyl)-N-acetylsphing-4-enine + 1-hexadecanoyl-sn-glycero-3-phosphoethanolamine. The enzyme catalyses 1-hexadecanoyl-2-(5Z,8Z,11Z,14Z-eicosatetraenoyl)-sn-glycero-3-phosphoethanolamine + N-(acetyl)-sphing-4-enine = 1-(5Z,8Z,11Z,14Z)-eicosatetraenoyl-N-(acetyl)-sphing-4-enine + 1-hexadecanoyl-sn-glycero-3-phosphoethanolamine. It catalyses the reaction N-(acetyl)-sphing-4-enine + a 1,2-diacyl-sn-glycero-3-phosphocholine = 1-O-acyl-N-(acetyl)-sphing-4-enine + a 1-acyl-sn-glycero-3-phosphocholine. The catalysed reaction is 1-hexadecanoyl-2-(9Z-octadecenoyl)-sn-glycero-3-phosphocholine + N-(acetyl)-sphing-4-enine = 1-(9Z-octadecenoyl)-N-(acetyl)-sphing-4-enine + 1-hexadecanoyl-sn-glycero-3-phosphocholine. It carries out the reaction 1-hexadecanoyl-2-(9Z,12Z-octadecadienoyl)-sn-glycero-3-phosphocholine + N-(acetyl)-sphing-4-enine = 1-(9Z,12Z-octadecadienoyl)-N-acetylsphing-4-enine + 1-hexadecanoyl-sn-glycero-3-phosphocholine. The enzyme catalyses 1-hexadecanoyl-2-(5Z,8Z,11Z,14Z-eicosatetraenoyl)-sn-glycero-3-phosphocholine + N-(acetyl)-sphing-4-enine = 1-(5Z,8Z,11Z,14Z)-eicosatetraenoyl-N-(acetyl)-sphing-4-enine + 1-hexadecanoyl-sn-glycero-3-phosphocholine. It catalyses the reaction 1-hexadecanoyl-2-(4Z,7Z,10Z,13Z,16Z,19Z-docosahexaenoyl)-sn-glycero-3-phosphocholine + N-(acetyl)-sphing-4-enine = 1-(4Z,7Z,10Z,13Z,16Z,19Z-docosahexaenoyl)-N-(acetyl)-sphing-4-enine + 1-hexadecanoyl-sn-glycero-3-phosphocholine. The catalysed reaction is 1-octadecanoyl-2-(9Z-octadecenoyl)-sn-glycero-3-phosphocholine + N-(acetyl)-sphing-4-enine = 1-(9Z-octadecenoyl)-N-(acetyl)-sphing-4-enine + 1-octadecanoyl-sn-glycero-3-phosphocholine. It carries out the reaction 1-octadecanoyl-2-(9Z,12Z)-octadecadienoyl-sn-glycero-3-phosphocholine + N-(acetyl)-sphing-4-enine = 1-(9Z,12Z-octadecadienoyl)-N-acetylsphing-4-enine + 1-octadecanoyl-sn-glycero-3-phosphocholine. The enzyme catalyses 1-octadecanoyl-2-(5Z,8Z,11Z,14Z-eicosatetraenoyl)-sn-glycero-3-phosphocholine + N-(acetyl)-sphing-4-enine = 1-(5Z,8Z,11Z,14Z)-eicosatetraenoyl-N-(acetyl)-sphing-4-enine + 1-octadecanoyl-sn-glycero-3-phosphocholine. It catalyses the reaction 1-(9Z-octadecenoyl)-2-hexadecanoyl-sn-glycero-3-phosphocholine + N-(acetyl)-sphing-4-enine = 1-hexadecanoyl-N-(acetyl)-sphing-4-enine + 1-(9Z-octadecenoyl)-sn-glycero-3-phosphocholine. The catalysed reaction is 1-(9Z)-octadecenoyl-2-octadecanoyl-sn-glycero-3-phosphocholine + N-(acetyl)-sphing-4-enine = 1-octadecanoyl-N-(acetyl)-sphing-4-enine + 1-(9Z-octadecenoyl)-sn-glycero-3-phosphocholine. It carries out the reaction 1,2-di-(9Z-octadecenoyl)-sn-glycero-3-phosphocholine + N-(acetyl)-sphing-4-enine = 1-(9Z-octadecenoyl)-N-(acetyl)-sphing-4-enine + 1-(9Z-octadecenoyl)-sn-glycero-3-phosphocholine. The enzyme catalyses N-(acetyl)-sphing-4-enine + a 1,2-diacyl-sn-glycero-3-phosphocholine = 1-O-acyl-N-(acetyl)-sphing-4-enine + a 2-acyl-sn-glycero-3-phosphocholine. It catalyses the reaction 1-hexadecanoyl-2-(9Z-octadecenoyl)-sn-glycero-3-phosphocholine + N-(acetyl)-sphing-4-enine = 1-hexadecanoyl-N-(acetyl)-sphing-4-enine + 2-(9Z-octadecenoyl)-sn-glycero-3-phosphocholine. The catalysed reaction is 1-hexadecanoyl-2-(9Z,12Z-octadecadienoyl)-sn-glycero-3-phosphocholine + N-(acetyl)-sphing-4-enine = 2-(9Z,12Z-octadecadienoyl)-sn-glycero-3-phosphocholine + 1-hexadecanoyl-N-(acetyl)-sphing-4-enine. It carries out the reaction 1-hexadecanoyl-2-(5Z,8Z,11Z,14Z-eicosatetraenoyl)-sn-glycero-3-phosphocholine + N-(acetyl)-sphing-4-enine = 1-hexadecanoyl-N-(acetyl)-sphing-4-enine + 2-(5Z,8Z,11Z,14Z)-eicosatetraenoyl-sn-glycero-3-phosphocholine. The enzyme catalyses 1-hexadecanoyl-2-(4Z,7Z,10Z,13Z,16Z,19Z-docosahexaenoyl)-sn-glycero-3-phosphocholine + N-(acetyl)-sphing-4-enine = 2-(4Z,7Z,10Z,13Z,16Z,19Z-docosahexaenoyl)-sn-glycero-3-phosphocholine + 1-hexadecanoyl-N-(acetyl)-sphing-4-enine. It catalyses the reaction 1-hexadecanoyl-2-nonadioyl-sn-glycero-3-phosphocholine + N-(acetyl)-sphing-4-enine = 2-nonadioyl-sn-glycero-3-phosphocholine + 1-hexadecanoyl-N-(acetyl)-sphing-4-enine. The catalysed reaction is 1-octadecanoyl-2-(9Z-octadecenoyl)-sn-glycero-3-phosphocholine + N-(acetyl)-sphing-4-enine = 1-octadecanoyl-N-(acetyl)-sphing-4-enine + 2-(9Z-octadecenoyl)-sn-glycero-3-phosphocholine. It carries out the reaction 1-octadecanoyl-2-(5Z,8Z,11Z,14Z-eicosatetraenoyl)-sn-glycero-3-phosphocholine + N-(acetyl)-sphing-4-enine = 1-octadecanoyl-N-(acetyl)-sphing-4-enine + 2-(5Z,8Z,11Z,14Z)-eicosatetraenoyl-sn-glycero-3-phosphocholine. The enzyme catalyses 1-(9Z-octadecenoyl)-2-hexadecanoyl-sn-glycero-3-phosphocholine + N-(acetyl)-sphing-4-enine = 1-(9Z-octadecenoyl)-N-(acetyl)-sphing-4-enine + 2-hexadecanoyl-sn-glycero-3-phosphocholine. It catalyses the reaction 1-(9Z)-octadecenoyl-2-octadecanoyl-sn-glycero-3-phosphocholine + N-(acetyl)-sphing-4-enine = 2-octadecanoyl-sn-glycero-3-phosphocholine + 1-(9Z-octadecenoyl)-N-(acetyl)-sphing-4-enine. The catalysed reaction is a 1,2-diacyl-sn-glycero-3-phospho-L-serine + N-(acetyl)-sphing-4-enine = a 2-acyl-sn-glycero-3-phospho-L-serine + 1-O-acyl-N-(acetyl)-sphing-4-enine. It carries out the reaction 1-octadecanoyl-2-(9Z-octadecenoyl)-sn-glycero-3-phospho-L-serine + N-(acetyl)-sphing-4-enine = 2-(9Z-octadecenoyl)-sn-glycero-3-phospho-L-serine + 1-octadecanoyl-N-(acetyl)-sphing-4-enine. The enzyme catalyses a 1,2-diacyl-sn-glycero-3-phospho-L-serine + N-(acetyl)-sphing-4-enine = 1-O-acyl-N-(acetyl)-sphing-4-enine + a 1-acyl-sn-glycero-3-phospho-L-serine. It catalyses the reaction 1-octadecanoyl-2-(9Z-octadecenoyl)-sn-glycero-3-phospho-L-serine + N-(acetyl)-sphing-4-enine = 1-octadecanoyl-sn-glycero-3-phosphoserine + 1-(9Z-octadecenoyl)-N-(acetyl)-sphing-4-enine. The catalysed reaction is a 1,2-diacyl-sn-glycero-3-phospho-(1'-sn-glycerol) + N-(acetyl)-sphing-4-enine = 2-acyl-sn-glycero-3-phospho-(1'-sn-glycerol) + 1-O-acyl-N-(acetyl)-sphing-4-enine. It carries out the reaction 1-octadecanoyl-2-(9Z-octadecenoyl)-sn-glycero-3-phospho-(1'-sn-glycerol) + N-(acetyl)-sphing-4-enine = 2-(9Z-octadecenoyl)-sn-glycero-3-phospho-(1'-sn-glycerol) + 1-octadecanoyl-N-(acetyl)-sphing-4-enine. The enzyme catalyses a 1,2-diacyl-sn-glycero-3-phospho-(1'-sn-glycerol) + N-(acetyl)-sphing-4-enine = 1-O-acyl-N-(acetyl)-sphing-4-enine + 1-acyl-sn-glycero-3-phospho-(1'-sn-glycerol). It catalyses the reaction 1-octadecanoyl-2-(9Z-octadecenoyl)-sn-glycero-3-phospho-(1'-sn-glycerol) + N-(acetyl)-sphing-4-enine = 1-octadecanoyl-sn-glycero-3-phospho-(1'-sn-glycerol) + 1-(9Z-octadecenoyl)-N-(acetyl)-sphing-4-enine. The catalysed reaction is an N-acylethanolamine + a 1,2-diacyl-sn-glycero-3-phosphocholine = 2-(acylamino)ethyl fatty acid + a 2-acyl-sn-glycero-3-phosphocholine. It carries out the reaction an N-acylethanolamine + a 1,2-diacyl-sn-glycero-3-phosphocholine = 2-(acylamino)ethyl fatty acid + a 1-acyl-sn-glycero-3-phosphocholine. The enzyme catalyses N-(5Z,8Z,11Z,14Z-eicosatetraenoyl)-ethanolamine + 1,2-di-(9Z-octadecenoyl)-sn-glycero-3-phosphocholine = 2-[(5Z,8Z,11Z,14Z)-eicosatetraenoylamino]ethyl (9Z)-octadecenoate + (9Z-octadecenoyl)-sn-glycero-3-phosphocholine. It catalyses the reaction N-(9Z-octadecenoyl) ethanolamine + 1,2-di-(9Z-octadecenoyl)-sn-glycero-3-phosphocholine = 2-[(9Z)-octadecenoylamino]ethyl (9Z)-octadecenoate + (9Z-octadecenoyl)-sn-glycero-3-phosphocholine. The catalysed reaction is a 3-acyl-sn-glycerol + a 1,2-diacyl-sn-glycero-3-phosphocholine = a 1,3-diacylglycerol + a 1-acyl-sn-glycero-3-phosphocholine. It carries out the reaction a 3-acyl-sn-glycerol + a 1,2-diacyl-sn-glycero-3-phosphocholine = a 1,3-diacylglycerol + a 2-acyl-sn-glycero-3-phosphocholine. The enzyme catalyses 3-(9Z-octadecenoyl)-sn-glycerol + 1,2-di-(9Z-octadecenoyl)-sn-glycero-3-phosphocholine = 1,3-di-(9Z-octadecenoyl)-glycerol + (9Z-octadecenoyl)-sn-glycero-3-phosphocholine. It catalyses the reaction 3-hexadecanoyl-sn-glycerol + 1,2-di-(9Z-octadecenoyl)-sn-glycero-3-phosphocholine = 1-(9Z)-octadecenoyl-3-hexadecanoyl-sn-glycerol + (9Z-octadecenoyl)-sn-glycero-3-phosphocholine. The catalysed reaction is a 1-acyl-sn-glycerol + a 1,2-diacyl-sn-glycero-3-phosphocholine = a 1,3-diacylglycerol + a 2-acyl-sn-glycero-3-phosphocholine. It carries out the reaction a 1-acyl-sn-glycerol + a 1,2-diacyl-sn-glycero-3-phosphocholine = a 1,3-diacylglycerol + a 1-acyl-sn-glycero-3-phosphocholine. The enzyme catalyses 1-(9Z-octadecenoyl)-sn-glycerol + 1,2-di-(9Z-octadecenoyl)-sn-glycero-3-phosphocholine = 1,3-di-(9Z-octadecenoyl)-glycerol + (9Z-octadecenoyl)-sn-glycero-3-phosphocholine. It catalyses the reaction 1-hexadecanoyl-sn-glycerol + 1,2-di-(9Z-octadecenoyl)-sn-glycero-3-phosphocholine = 1-hexadecanoyl-3-(9Z)-octadecenoyl-sn-glycerol + (9Z-octadecenoyl)-sn-glycero-3-phosphocholine. The catalysed reaction is a 2-acylglycerol + a 1,2-diacyl-sn-glycero-3-phosphocholine = a 1,2-diacylglycerol + a 2-acyl-sn-glycero-3-phosphocholine. It carries out the reaction a 2-acylglycerol + a 1,2-diacyl-sn-glycero-3-phosphocholine = a 1,2-diacylglycerol + a 1-acyl-sn-glycero-3-phosphocholine. The enzyme catalyses 2-hexadecanoylglycerol + 1,2-di-(9Z-octadecenoyl)-sn-glycero-3-phosphocholine = 1-(9Z)-octadecenoyl-2-hexadecanoylglycerol + (9Z-octadecenoyl)-sn-glycero-3-phosphocholine. It catalyses the reaction 1-O-alkylglycerol + a 1,2-diacyl-sn-glycero-3-phosphocholine = 1-O-alkyl-3-acylglycerol + a 1-acyl-sn-glycero-3-phosphocholine. The catalysed reaction is 1-O-alkylglycerol + a 1,2-diacyl-sn-glycero-3-phosphocholine = 1-O-alkyl-3-acylglycerol + a 2-acyl-sn-glycero-3-phosphocholine. It carries out the reaction 1-O-hexadecylglycerol + 1,2-di-(9Z-octadecenoyl)-sn-glycero-3-phosphocholine = 1-O-hexadecyl-3-(9Z)-octadecenoylglycerol + (9Z-octadecenoyl)-sn-glycero-3-phosphocholine. The enzyme catalyses 1-O-alkyl-2-acyl-sn-glycerol + a 1,2-diacyl-sn-glycero-3-phosphocholine = 1-O-alkyl-2,3-diacyl-sn-glycerol + a 2-acyl-sn-glycero-3-phosphocholine. It catalyses the reaction 1-O-alkyl-2-acyl-sn-glycerol + a 1,2-diacyl-sn-glycero-3-phosphocholine = 1-O-alkyl-2,3-diacyl-sn-glycerol + a 1-acyl-sn-glycero-3-phosphocholine. The catalysed reaction is 1-O-hexadecyl-2-acetyl-sn-glycerol + 1,2-di-(9Z-octadecenoyl)-sn-glycero-3-phosphocholine = 1-O-hexadecyl-2-acetyl-3-(9Z)-octadecenoyl-sn-glycerol + (9Z-octadecenoyl)-sn-glycero-3-phosphocholine. It carries out the reaction 1-O-hexadecyl-2-O-methyl-sn-glycerol + 1,2-di-(9Z-octadecenoyl)-sn-glycero-3-phosphocholine = 1-O-hexadecyl-2-O-methyl-3-(9Z)-octadecenoyl-sn-glycerol + (9Z-octadecenoyl)-sn-glycero-3-phosphocholine. The enzyme catalyses a 1,2-diacyl-sn-glycero-3-phosphoethanolamine + H2O = a 1-acyl-sn-glycero-3-phosphoethanolamine + a fatty acid + H(+). It catalyses the reaction 1-acyl-2-(5Z,8Z,11Z,14Z)-eicosatetraenoyl-sn-glycero-3-phosphoethanolamine + H2O = a 1-acyl-sn-glycero-3-phosphoethanolamine + (5Z,8Z,11Z,14Z)-eicosatetraenoate + H(+). The catalysed reaction is a 1,2-diacyl-sn-glycero-3-phospho-(1'-sn-glycerol) + H2O = 1-acyl-sn-glycero-3-phospho-(1'-sn-glycerol) + a fatty acid + H(+). It carries out the reaction 1-hexadecanoyl-2-(9Z-octadecenoyl)-sn-glycero-3-phospho-(1'-sn-glycerol) + H2O = 1-hexadecanoyl-sn-glycero-3-phospho-(1'-sn-glycerol) + (9Z)-octadecenoate + H(+). The enzyme catalyses a 1,2-diacyl-sn-glycero-3-phospho-(1'-sn-glycerol) + H2O = 2-acyl-sn-glycero-3-phospho-(1'-sn-glycerol) + a fatty acid + H(+). It catalyses the reaction 1-hexadecanoyl-2-(9Z-octadecenoyl)-sn-glycero-3-phospho-(1'-sn-glycerol) + H2O = 2-(9Z-octadecenoyl)-sn-glycero-3-phospho-(1'-sn-glycerol) + hexadecanoate + H(+). Inhibited by zinc ions at neutral pH. Zinc ions in plasma may keep the enzyme from hydrolyzing inappropriate substrates. Its function is as follows. Has dual calcium-independent phospholipase and O-acyltransferase activities with a potential role in glycerophospholipid homeostasis and remodeling of acyl groups of lipophilic alcohols present in acidic cellular compartments. Catalyzes hydrolysis of the ester bond of the fatty acyl group attached at sn-1 or sn-2 position of phospholipids (phospholipase A1 or A2 activity) and transfer it to the hydroxyl group at the first carbon of lipophilic alcohols (O-acyltransferase activity). Among preferred fatty acyl donors are phosphatidylcholines, phosphatidylethanolamines, phosphatidylglycerols and phosphatidylserines. Favors sn-2 over sn-1 deacylation of unsaturated fatty acyl groups of phosphatidylcholines, phosphatidylethanolamines, and phosphatidylglycerols. Among preferred fatty acyl acceptors are natural lipophilic alcohols including short-chain ceramide N-acetyl-sphingosine (C2 ceramide), alkylacylglycerols, monoacylglycerols, and acylethanolamides such as anandamide and oleoylethanolamide. Selectively hydrolyzes the sn-1 fatty acyl group of truncated oxidized phospholipids and may play a role in detoxification of reactive oxidized phospholipids during oxidative stress. Required for normal phospholipid degradation in alveolar macrophages with potential implications in the clearance of pulmonary surfactant, which is mainly composed of dipalmitoylphosphatidylcholine (1,2-dihexadecanoyl-sn-glycero-3-phosphocholine). Involved in the first step of bis(monoacylglycero)phosphate (BMP) de novo synthesis from phosphatidylglycerol (1,2-diacyl-sn-glycero-3-phospho-(1'-sn-glycerol), PG). BMP is an important player in cargo sorting and degradation, regulation of cellular cholesterol levels and intercellular communication. At neutral pH, hydrolyzes the sn-1 fatty acyl group of the lysophosphatidylcholines. The polypeptide is Lysosomal phospholipase A and acyltransferase (Homo sapiens (Human)).